We begin with the raw amino-acid sequence, 70 residues long: Toxin Isom2 (70 aa).

Positions 2-65 constitute an LCN-type CS-alpha/beta domain; it reads KNGYAVDSSG…ISDTRKKYCD (64 aa). Intrachain disulfides connect cysteine 16–cysteine 37, cysteine 22–cysteine 42, cysteine 26–cysteine 44, and cysteine 38–cysteine 64.

In terms of tissue distribution, expressed by the venom gland.

It is found in the secreted. Functionally, excitatory insect beta-toxins induce a spastic paralysis. They bind voltage-independently at site-4 of sodium channels (Nav) and shift the voltage of activation toward more negative potentials thereby affecting sodium channel activation and promoting spontaneous and repetitive firing. The protein is Toxin Isom2 of Isometrus vittatus (Bark scorpion).